Reading from the N-terminus, the 803-residue chain is Volume-regulated anion channel subunit LRRC8C (803 aa).

Residues 1–22 (MIPVTEFRQFSEQQPAFRVLKP) are Cytoplasmic-facing. A helical membrane pass occupies residues 23–48 (WWDVFTDYLSVAMLMIGVFGCTLQVM). The Extracellular portion of the chain corresponds to 49–124 (QDKIICLPKR…CYERALHWYA (76 aa)). 2 disulfides stabilise this stretch: cysteine 54–cysteine 308 and cysteine 115–cysteine 293. Residues 125–144 (KYFPYLVLIHTLVFMLCSNF) form a helical membrane-spanning segment. The Cytoplasmic portion of the chain corresponds to 145–262 (WFKFPGSSSK…EEGDILYAMY (118 aa)). The segment at 177 to 206 (EVSGEDSEEKDNRKNNMNRSGTIQSGPEGN) is disordered. Over residues 191-206 (NNMNRSGTIQSGPEGN) the composition is skewed to polar residues. A phosphoserine mark is found at serine 212 and serine 215. A helical membrane pass occupies residues 263–284 (VRQTVLKVIKFLIIIAYNSALV). The Extracellular segment spans residues 285 to 314 (SKVQFTVDCNVDIQDMTGYKNFSCNHTMAH). Residues 315-339 (LFSKLSFCYLCFVSIYGLTCLYTLY) form a helical membrane-spanning segment. The Cytoplasmic portion of the chain corresponds to 340–803 (WLFYRSLREY…SDVREQMKAD (464 aa)). LRR repeat units lie at residues 409–420 (WTPDKLRQKLQT), 421–443 (NAHN…VFEI), 446–466 (LQSL…IAQL), 467–488 (DNLQ…ALSF), 490–513 (KENL…MYGL), 515–537 (NLEE…TLES), 541–563 (LKSL…VVDV), 566–586 (HLQK…NNLK), 588–611 (MTNL…VFSL), 613–635 (SLQE…SFQH), 637–659 (RKLT…IKKL), 660–682 (TSLE…LFLC), 684–705 (KIRY…IGVL), 706–728 (QSLQ…LYFC), 730–751 (KLKT…IGNL), 752–774 (LFLS…LGDC), and 776–799 (ALKR…VREQ).

This sequence belongs to the LRRC8 family. In terms of assembly, heterohexamer; oligomerizes with other LRRC8 proteins (LRRC8A, LRRC8B, LRRC8D and/or LRRC8E) to form a heterohexamer. Homoheptamer; inactive, likely because it is not targeted to the plasma membrane in the absence of LRRC8A. In vivo, the subunit composition may depend primarily on expression levels, and heterooligomeric channels containing various proportions of the different LRRC8 proteins may coexist. In terms of tissue distribution, expressed at very low levels in adipose tissue.

Its subcellular location is the cell membrane. The protein localises to the endoplasmic reticulum membrane. It catalyses the reaction chloride(in) = chloride(out). It carries out the reaction iodide(out) = iodide(in). The enzyme catalyses taurine(out) = taurine(in). The catalysed reaction is 2',3'-cGAMP(out) = 2',3'-cGAMP(in). Non-essential component of the volume-regulated anion channel (VRAC, also named VSOAC channel), an anion channel required to maintain a constant cell volume in response to extracellular or intracellular osmotic changes. The VRAC channel conducts iodide better than chloride and can also conduct organic osmolytes like taurine. Plays a redundant role in the efflux of amino acids, such as aspartate and glutamate, in response to osmotic stress. The VRAC channel also mediates transport of immunoreactive cyclic dinucleotide GMP-AMP (2'-3'-cGAMP), an immune messenger produced in response to DNA virus in the cytosol. Channel activity requires LRRC8A plus at least one other family member (LRRC8B, LRRC8C, LRRC8D or LRRC8E); channel characteristics depend on the precise subunit composition. May play a role in adipogenesis. The polypeptide is Volume-regulated anion channel subunit LRRC8C (Mus musculus (Mouse)).